Reading from the N-terminus, the 122-residue chain is Succinate dehydrogenase assembly factor 3, mitochondrial (122 aa).

The transit peptide at 1-47 directs the protein to the mitochondrion; the sequence is MHPSVVRLVKPRRPERITSPILPPLPLYRAILRAHHRKLPQELRYLG.

The protein belongs to the complex I LYR family. SDHAF3 subfamily. Interacts with the iron-sulfur protein subunit within the SDH catalytic dimer.

Its subcellular location is the mitochondrion matrix. In terms of biological role, plays an essential role in the assembly of succinate dehydrogenase (SDH), an enzyme complex (also referred to as respiratory complex II) that is a component of both the tricarboxylic acid (TCA) cycle and the mitochondrial electron transport chain, and which couples the oxidation of succinate to fumarate with the reduction of ubiquinone (coenzyme Q) to ubiquinol. Promotes maturation of the iron-sulfur protein subunit of the SDH catalytic dimer, protecting it from the deleterious effects of oxidants. May act together with SDHAF1. The protein is Succinate dehydrogenase assembly factor 3, mitochondrial of Candida albicans (strain SC5314 / ATCC MYA-2876) (Yeast).